The sequence spans 558 residues: Arginine--tRNA ligase (558 aa).

The 'HIGH' region motif lies at 129–139; the sequence is ANPTGPLHVGH.

Belongs to the class-I aminoacyl-tRNA synthetase family. In terms of assembly, monomer.

The protein localises to the cytoplasm. The catalysed reaction is tRNA(Arg) + L-arginine + ATP = L-arginyl-tRNA(Arg) + AMP + diphosphate. In Polaromonas naphthalenivorans (strain CJ2), this protein is Arginine--tRNA ligase.